The chain runs to 309 residues: Lactamase-like protein aptB (309 aa).

Zn(2+) contacts are provided by His-97, His-99, Asp-101, and His-102. Residue Asp-101 is the Proton donor/acceptor of the active site.

Belongs to the metallo-beta-lactamase superfamily. The cofactor is Zn(2+).

The enzyme catalyses 2,3,6,8,9-pentahydroxy-1-oxo-3-(2-oxopropyl)-1,2,3,4-tetrahydroanthracene-2-carboxyl-[ACP] + H2O = 2,3,6,8,9-pentahydroxy-1-oxo-3-(2-oxopropyl)-1,2,3,4-tetrahydroanthracene-2-carboxylate + holo-[ACP] + H(+). It participates in secondary metabolite biosynthesis. In terms of biological role, lactamase-like protein; part of the gene cluster that mediates the biosynthesis of asperthecin, an anthraquinone pigment. Polyketide synthase (PKS) aptA catalyzes the formation of the aromatic polyketide from acetyl coenzyme A and seven malonyl coenzyme A molecules. Polyketide is subsequently hydrolyzed by the action of aptB into endocrocin-9-anthrone. Endocrocin-9-anthrone is then oxidized into endocrocin by aptC. Endocrocin is likely to decarboxylate spontaneously to form emodin which explains why there is no decarboxylase in the asperthecin biosynthesis cluster. Finally, aptC or another endogenous oxygenase catalyzes additional oxidation steps to form asperthecin. The polypeptide is Lactamase-like protein aptB (Emericella nidulans (strain FGSC A4 / ATCC 38163 / CBS 112.46 / NRRL 194 / M139) (Aspergillus nidulans)).